A 316-amino-acid chain; its full sequence is D-alanine--D-alanine ligase (316 aa).

Residues 104-303 enclose the ATP-grasp domain; sequence KRVWLQHGLP…YADLCVAILA (200 aa). 130–185 contacts ATP; the sequence is PDRLGLPLILKPPHEGSTVGITKVAGYSDMKAAYELAARFDAEVLAEQFITGRELT. Mg(2+) contacts are provided by Asp-257, Glu-270, and Asn-272.

The protein belongs to the D-alanine--D-alanine ligase family. It depends on Mg(2+) as a cofactor. Mn(2+) is required as a cofactor.

Its subcellular location is the cytoplasm. The catalysed reaction is 2 D-alanine + ATP = D-alanyl-D-alanine + ADP + phosphate + H(+). Its pathway is cell wall biogenesis; peptidoglycan biosynthesis. Its function is as follows. Cell wall formation. The polypeptide is D-alanine--D-alanine ligase (Bordetella parapertussis (strain 12822 / ATCC BAA-587 / NCTC 13253)).